The following is a 555-amino-acid chain: Beta-caryophyllene synthase (555 aa).

Positions 313, 317, 456, and 464 each coordinate Mg(2+). The DDXXD motif signature appears at Asp-313 to Asp-317.

This sequence belongs to the terpene synthase family. Mg(2+) serves as cofactor.

It catalyses the reaction (2E,6E)-farnesyl diphosphate = (+)-(E)-beta-caryophyllene + diphosphate. It participates in secondary metabolite biosynthesis; terpenoid biosynthesis. Its function is as follows. Sesquiterpene synthase converting farnesyl diphosphate to beta-caryophyllene as the major product. The chain is Beta-caryophyllene synthase from Phyla dulcis (Aztec sweet herb).